The sequence spans 313 residues: Solute carrier family 35 member E3 (313 aa).

9 helical membrane passes run 17–37, 40–60, 71–91, 126–146, 154–174, 187–206, 225–245, 252–272, and 275–295; these read GLLFNLLVSICIVFLNKWIYV, GFPNMSLTLVHFVVTWLGLYI, SLPLSKLLLLALSFCGFVVFT, FSVRIQLTLIPITVGVILNSY, LGMVFAALGVVVTSLYQVWVG, LLYYQAPMSSAMLLVAVPFF, LMVLLSGIIAFMVNLSIYWII, TYNMFGHFKFCITLCGGYILF, and PLSVNQGLGILCTLFGILTYT.

Belongs to the TPT transporter family. SLC35E subfamily.

It is found in the membrane. Its function is as follows. Putative transporter. This chain is Solute carrier family 35 member E3 (Slc35e3), found in Mus musculus (Mouse).